A 113-amino-acid chain; its full sequence is Ribonuclease P protein component (113 aa).

It belongs to the RnpA family. In terms of assembly, consists of a catalytic RNA component (M1 or rnpB) and a protein subunit.

It catalyses the reaction Endonucleolytic cleavage of RNA, removing 5'-extranucleotides from tRNA precursor.. Functionally, RNaseP catalyzes the removal of the 5'-leader sequence from pre-tRNA to produce the mature 5'-terminus. It can also cleave other RNA substrates such as 4.5S RNA. The protein component plays an auxiliary but essential role in vivo by binding to the 5'-leader sequence and broadening the substrate specificity of the ribozyme. In Clostridium novyi (strain NT), this protein is Ribonuclease P protein component.